The following is a 300-amino-acid chain: SNAP25 homologous protein SNAP33 (300 aa).

Disordered stretches follow at residues 1-76 (MFGL…QSLF) and 176-228 (WKPK…PESA). A Phosphoserine modification is found at serine 29. Over residues 38–49 (TLNPSKRTTSEP) the composition is skewed to polar residues. Basic and acidic residues predominate over residues 190–208 (TRDDSPTRRVNHLEKREKL). Positions 235–297 (EMEKAKQDDG…QQSNQRGRRL (63 aa)) constitute a t-SNARE coiled-coil homology domain.

Belongs to the SNAP-25 family. As to quaternary structure, interacts with the cytokinesis-specific syntaxin KNOLLE and with SYP121. Binds to EXO70B2. As to expression, ubiquitous, with a strong expression in root tips, ovules, very young leaves, vascular tissue, hydathodes, stipules and the abscission and dehiscence zones of the siliques.

It is found in the membrane. In terms of biological role, t-SNARE involved in diverse vesicle trafficking and membrane fusion processes, including cell plate formation. May function in the secretory pathway. The polypeptide is SNAP25 homologous protein SNAP33 (Arabidopsis thaliana (Mouse-ear cress)).